Here is a 49-residue protein sequence, read N- to C-terminus: Large ribosomal subunit protein bL33A (49 aa).

It belongs to the bacterial ribosomal protein bL33 family.

This Staphylococcus aureus (strain COL) protein is Large ribosomal subunit protein bL33A.